We begin with the raw amino-acid sequence, 130 residues long: Small ribosomal subunit protein uS11 (130 aa).

It belongs to the universal ribosomal protein uS11 family. As to quaternary structure, part of the 30S ribosomal subunit. Interacts with proteins S7 and S18. Binds to IF-3.

Functionally, located on the platform of the 30S subunit, it bridges several disparate RNA helices of the 16S rRNA. Forms part of the Shine-Dalgarno cleft in the 70S ribosome. The polypeptide is Small ribosomal subunit protein uS11 (Shewanella halifaxensis (strain HAW-EB4)).